The following is a 358-amino-acid chain: Aromatic amino acid aminotransferase (358 aa).

Lys222 carries the N6-(pyridoxal phosphate)lysine modification.

It belongs to the class-II pyridoxal-phosphate-dependent aminotransferase family. As to quaternary structure, homodimer. Requires pyridoxal 5'-phosphate as cofactor.

The enzyme catalyses an aromatic L-alpha-amino acid + 2-oxoglutarate = an aromatic oxo-acid + L-glutamate. Its function is as follows. Aminotransferase that catalyzes the conversion of aromatic amino acids and 2-oxoglutarate into corresponding aromatic oxo acids and L-glutamate. In Mycobacterium sp. (strain KMS), this protein is Aromatic amino acid aminotransferase.